Reading from the N-terminus, the 239-residue chain is Fumarate reductase iron-sulfur subunit (239 aa).

A 2Fe-2S ferredoxin-type domain is found at Leu5–Pro95. [2Fe-2S] cluster contacts are provided by Cys57, Cys62, Cys65, and Cys77. The 30-residue stretch at Ala142–Val171 folds into the 4Fe-4S ferredoxin-type domain. [4Fe-4S] cluster is bound by residues Cys151, Cys154, and Cys157. Residues Cys161, Cys208, and Cys214 each coordinate [3Fe-4S] cluster. Position 218 (Cys218) interacts with [4Fe-4S] cluster.

This sequence belongs to the succinate dehydrogenase/fumarate reductase iron-sulfur protein family. Part of an enzyme complex containing three subunits: a flavoprotein (frdA), an iron-sulfur protein (frdB), and diheme cytochrome b (frdC). [2Fe-2S] cluster serves as cofactor. Requires [3Fe-4S] cluster as cofactor. The cofactor is [4Fe-4S] cluster.

Its subcellular location is the cell inner membrane. The enzyme catalyses a menaquinone + succinate = a menaquinol + fumarate. Functionally, the fumarate reductase enzyme complex is required for fumarate respiration using formate or sulfide as electron donor. The chain is Fumarate reductase iron-sulfur subunit (frdB) from Wolinella succinogenes (strain ATCC 29543 / DSM 1740 / CCUG 13145 / JCM 31913 / LMG 7466 / NCTC 11488 / FDC 602W) (Vibrio succinogenes).